The primary structure comprises 165 residues: 3-isopropylmalate dehydratase small subunit (165 aa).

It belongs to the LeuD family. LeuD type 2 subfamily. In terms of assembly, heterodimer of LeuC and LeuD.

The enzyme catalyses (2R,3S)-3-isopropylmalate = (2S)-2-isopropylmalate. Its pathway is amino-acid biosynthesis; L-leucine biosynthesis; L-leucine from 3-methyl-2-oxobutanoate: step 2/4. In terms of biological role, catalyzes the isomerization between 2-isopropylmalate and 3-isopropylmalate, via the formation of 2-isopropylmaleate. This chain is 3-isopropylmalate dehydratase small subunit, found in Lachnoclostridium phytofermentans (strain ATCC 700394 / DSM 18823 / ISDg) (Clostridium phytofermentans).